Here is a 137-residue protein sequence, read N- to C-terminus: Small ribosomal subunit protein uS9 (137 aa).

The protein belongs to the universal ribosomal protein uS9 family.

This is Small ribosomal subunit protein uS9 from Picosynechococcus sp. (strain ATCC 27264 / PCC 7002 / PR-6) (Agmenellum quadruplicatum).